Consider the following 805-residue polypeptide: N-(5-amino-5-carboxypentanoyl)-L-cysteinyl-D-valine synthase (805 aa).

A disordered region spans residues 783–805; sequence PDTGGGAVGSTTTGGVRGELREI.

The protein belongs to the ATP-dependent AMP-binding enzyme family. Requires pantetheine 4'-phosphate as cofactor.

It carries out the reaction L-2-aminoadipate + L-valine + L-cysteine + 3 ATP + H2O = N-[(5S)-5-amino-5-carboxypentanoyl]-L-cysteinyl-D-valine + 3 AMP + 3 diphosphate + 3 H(+). Its pathway is antibiotic biosynthesis; penicillin G biosynthesis; penicillin G from L-alpha-aminoadipate and L-cysteine and L-valine: step 1/3. Each of the constituent amino acids of ACV are activated as aminoacyl-adenylates with peptide bonds formed through the participation of amino acid thioester intermediates. This chain is N-(5-amino-5-carboxypentanoyl)-L-cysteinyl-D-valine synthase (pcbAB), found in Streptomyces clavuligerus.